The chain runs to 750 residues: EF-hand domain-containing family member C2 (750 aa).

DM10 domains follow at residues 75–182, 226–368, and 430–537; these read DKQV…KKIG, DGKV…RTKY, and ISNI…ENNT. The region spanning 557–592 is the EF-hand domain; sequence SKSREITQVFAAADYNHTKVVPYNTFRDILMSITMG.

Microtubule inner protein component of sperm flagellar doublet microtubules.

The protein localises to the cytoplasm. The protein resides in the cytoskeleton. It is found in the cilium axoneme. Its subcellular location is the flagellum axoneme. In terms of biological role, microtubule inner protein (MIP) part of the dynein-decorated doublet microtubules (DMTs) in cilia axoneme, which is required for motile cilia beating. The polypeptide is EF-hand domain-containing family member C2 (Efhc2) (Mus musculus (Mouse)).